The sequence spans 59 residues: Large ribosomal subunit protein bL32 (59 aa).

Residues 1–16 show a composition bias toward basic residues; the sequence is MAVPKRKTSPSKRGMR. A disordered region spans residues 1–59; sequence MAVPKRKTSPSKRGMRRSADALKAPTYIEDKNSGELRRPHHIDLKTGMYRGRSVLPPKD. Residues 28-44 show a composition bias toward basic and acidic residues; that stretch reads IEDKNSGELRRPHHIDL.

This sequence belongs to the bacterial ribosomal protein bL32 family.

This Bartonella quintana (strain Toulouse) (Rochalimaea quintana) protein is Large ribosomal subunit protein bL32.